The chain runs to 520 residues: 2-isopropylmalate synthase (520 aa).

The Pyruvate carboxyltransferase domain maps to 12–274; the sequence is VIIFDTTLRD…WNKIDTTQLT (263 aa). Mn(2+)-binding residues include aspartate 21, histidine 209, histidine 211, and asparagine 245. Residues 398–520 are regulatory domain; it reads KLTSLTVIAG…RDTVTTAAAS (123 aa).

This sequence belongs to the alpha-IPM synthase/homocitrate synthase family. LeuA type 1 subfamily. As to quaternary structure, homodimer. Mn(2+) is required as a cofactor.

The protein resides in the cytoplasm. The enzyme catalyses 3-methyl-2-oxobutanoate + acetyl-CoA + H2O = (2S)-2-isopropylmalate + CoA + H(+). It functions in the pathway amino-acid biosynthesis; L-leucine biosynthesis; L-leucine from 3-methyl-2-oxobutanoate: step 1/4. Functionally, catalyzes the condensation of the acetyl group of acetyl-CoA with 3-methyl-2-oxobutanoate (2-ketoisovalerate) to form 3-carboxy-3-hydroxy-4-methylpentanoate (2-isopropylmalate). In Bradyrhizobium diazoefficiens (strain JCM 10833 / BCRC 13528 / IAM 13628 / NBRC 14792 / USDA 110), this protein is 2-isopropylmalate synthase.